A 272-amino-acid polypeptide reads, in one-letter code: Merozoite surface protein 2 (272 aa).

An N-terminal signal peptide occupies residues 1-20 (MKVIKTLSIINFFIFVTFNI). N22 and N36 each carry an N-linked (GlcNAc...) asparagine glycan. The segment at 44 to 198 (AESKPSTGAG…EQTESPELQS (155 aa)) is polymorphic region. Residues 45–233 (ESKPSTGAGG…DSQKECTDGN (189 aa)) are disordered. Positions 51 to 82 (GAGGSAGGSAGGSAGGSAGGSAGGSAGSGDGN) are enriched in gly residues. Repeat copies occupy residues 53–56 (GGSA), 57–60 (GGSA), 61–64 (GGSA), 65–68 (GGSA), 69–72 (GGSA), and 73–76 (GGSA). A 6 X 4 AA tandem repeats of G-G-S-A region spans residues 53–76 (GGSAGGSAGGSAGGSAGGSAGGSA). Residues 83–119 (GADAEGSSSTPATTTTTKTTTTTTTTNDAEASTSTSS) show a composition bias toward low complexity. The segment covering 122–137 (PNHKNAETNPKGKGEV) has biased composition (basic and acidic residues). 2 stretches are compositionally biased toward polar residues: residues 139–165 (EPNQ…NVPP) and 172–200 (KSPT…QSAP). An N-linked (GlcNAc...) asparagine glycan is attached at N149. An N-linked (GlcNAc...) asparagine glycan is attached at N221. C229 and C237 are joined by a disulfide. N-linked (GlcNAc...) asparagine glycosylation is found at N245 and N246. The GPI-anchor amidated asparagine moiety is linked to residue N246. A propeptide spans 247-272 (SSNIASINKFVVLISATLVLSFAIFI) (removed in mature form).

It localises to the cell membrane. Its function is as follows. May play a role in the merozoite attachment to the erythrocyte. This is Merozoite surface protein 2 from Plasmodium falciparum (isolate 3D7).